Consider the following 101-residue polypeptide: Small ribosomal subunit protein uS14 (101 aa).

Belongs to the universal ribosomal protein uS14 family. As to quaternary structure, part of the 30S ribosomal subunit. Contacts proteins S3 and S10.

Its function is as follows. Binds 16S rRNA, required for the assembly of 30S particles and may also be responsible for determining the conformation of the 16S rRNA at the A site. The sequence is that of Small ribosomal subunit protein uS14 from Shewanella oneidensis (strain ATCC 700550 / JCM 31522 / CIP 106686 / LMG 19005 / NCIMB 14063 / MR-1).